A 112-amino-acid chain; its full sequence is Ribosome-binding factor A (112 aa).

The protein belongs to the RbfA family. As to quaternary structure, monomer. Binds 30S ribosomal subunits, but not 50S ribosomal subunits or 70S ribosomes.

The protein localises to the cytoplasm. Its function is as follows. One of several proteins that assist in the late maturation steps of the functional core of the 30S ribosomal subunit. Associates with free 30S ribosomal subunits (but not with 30S subunits that are part of 70S ribosomes or polysomes). Required for efficient processing of 16S rRNA. May interact with the 5'-terminal helix region of 16S rRNA. The polypeptide is Ribosome-binding factor A (Ruthia magnifica subsp. Calyptogena magnifica).